The sequence spans 372 residues: sn-glycerol-3-phosphate import ATP-binding protein UgpC (372 aa).

The ABC transporter domain maps to 2-233 (LDIQQLVKTY…PASTFVASFI (232 aa)). 35-42 (GPSGCGKS) is an ATP binding site.

This sequence belongs to the ABC transporter superfamily. sn-glycerol-3-phosphate importer (TC 3.A.1.1.3) family. The complex is composed of two ATP-binding proteins (UgpC), two transmembrane proteins (UgpA and UgpE) and a solute-binding protein (UgpB).

The protein localises to the cell inner membrane. It catalyses the reaction sn-glycerol 3-phosphate(out) + ATP + H2O = sn-glycerol 3-phosphate(in) + ADP + phosphate + H(+). Its function is as follows. Part of the ABC transporter complex UgpBAEC involved in sn-glycerol-3-phosphate (G3P) import. Responsible for energy coupling to the transport system. The chain is sn-glycerol-3-phosphate import ATP-binding protein UgpC from Vibrio vulnificus (strain YJ016).